The primary structure comprises 318 residues: Ankyrin repeat and SOCS box protein 7 (318 aa).

ANK repeat units follow at residues 13–42 (QEELQIQAAVAAGDVHTVRKMLEQGYSPNG), 46–75 (NGWTLLHFSAARGKERCVRVFLEHGADPTV), 80–109 (GGFTALHYAAMHGRARIARLMLESEYRSDI), 116–145 (DGWTPLHVAAHYGRDSFVRLLLEFKAEVDP), 149–178 (KGTTPLQLAIIRERSSCVKILLDHNANIDI), 180–208 (NGFLLRYAVIKSNHSYCRMFLQRGADTNL), and 213–242 (DGQTPLHLSALRDDVLCARMLYNYGADTNT). The 54-residue stretch at 265–318 (LDFLQDVTRQPRTLQDLCRIKIRQCIGLQNLKLLDELPIAKVMKDYLKHKFDDI) folds into the SOCS box domain.

Belongs to the ankyrin SOCS box (ASB) family. As to quaternary structure, interacts with CUL5. Interacts with RNF7. Interacts with PSRC1.

The protein resides in the nucleus. It is found in the cytoplasm. Its pathway is protein modification; protein ubiquitination. Its function is as follows. Probable substrate-recognition component of a SCF-like ECS (Elongin-Cullin-SOCS-box protein) E3 ubiquitin-protein ligase complex which mediates the ubiquitination and subsequent proteasomal degradation of target proteins. Plays a role in spindle dynamics and genome integrity by targeting the mitotic progression protein PSRC1 for proteasomal degradation in a cell cycle-dependent manner. Also participates in meiosis by mediating the proper attachment between kinetochores and microtubules. The sequence is that of Ankyrin repeat and SOCS box protein 7 (Asb7) from Mus musculus (Mouse).